Here is a 294-residue protein sequence, read N- to C-terminus: HTH-type transcriptional regulator TcbR (294 aa).

The region spanning 1–58 (MEFRQLKYFIAVAEAGNMAAAAKRLHVSQPPITRQMQALEADLGVVLLERSHRGIELT) is the HTH lysR-type domain. The H-T-H motif DNA-binding region spans 18-37 (MAAAAKRLHVSQPPITRQMQ).

The protein belongs to the LysR transcriptional regulatory family.

In terms of biological role, involved in regulation of chlorinated catechol metabolism. Transcriptional activator of the tcbCDEF chlorocatechol oxidative operon. May bind 2-chloromuconate as an inducer. The chain is HTH-type transcriptional regulator TcbR (tcbR) from Pseudomonas sp. (strain P51).